Reading from the N-terminus, the 465-residue chain is Na(+)-translocating NADH-quinone reductase subunit A (465 aa).

This sequence belongs to the NqrA family. As to quaternary structure, composed of six subunits; NqrA, NqrB, NqrC, NqrD, NqrE and NqrF.

It catalyses the reaction a ubiquinone + n Na(+)(in) + NADH + H(+) = a ubiquinol + n Na(+)(out) + NAD(+). Functionally, NQR complex catalyzes the reduction of ubiquinone-1 to ubiquinol by two successive reactions, coupled with the transport of Na(+) ions from the cytoplasm to the periplasm. NqrA to NqrE are probably involved in the second step, the conversion of ubisemiquinone to ubiquinol. In Chlamydia trachomatis serovar A (strain ATCC VR-571B / DSM 19440 / HAR-13), this protein is Na(+)-translocating NADH-quinone reductase subunit A.